The following is a 333-amino-acid chain: Type II restriction enzyme XcyI (333 aa).

The protein belongs to the XcyI type II restriction endonuclease family. In terms of assembly, monomer. Mg(2+) is required as a cofactor.

It carries out the reaction Endonucleolytic cleavage of DNA to give specific double-stranded fragments with terminal 5'-phosphates.. Its function is as follows. A P subtype restriction enzyme that recognizes the double-stranded sequence 5'-CCCGGG-3' and cleaves after C-1. The protein is Type II restriction enzyme XcyI (xcyIR) of Xanthomonas campestris pv. cyanopsidis.